The primary structure comprises 188 residues: Type II secretion system protein H (188 aa).

Residues 1–10 (MKRSTRKQQG) constitute a propeptide, leader sequence. Phe11 is modified (N-methylphenylalanine). A helical membrane pass occupies residues 13-35 (LLEMMLVVLLAGIAAGMVVMAFP).

Belongs to the GSP H family. In terms of assembly, type II secretion is composed of four main components: the outer membrane complex, the inner membrane complex, the cytoplasmic secretion ATPase and the periplasm-spanning pseudopilus. Interacts with core component OutG. Cleaved by prepilin peptidase. In terms of processing, methylated by prepilin peptidase at the amino group of the N-terminal phenylalanine once the leader sequence is cleaved by prepilin peptidase.

The protein localises to the cell inner membrane. In terms of biological role, component of the type II secretion system required for the energy-dependent secretion of extracellular factors such as proteases and toxins from the periplasm. Part of the pseudopilus tip complex that is critical for the recognition and binding of secretion substrates. The polypeptide is Type II secretion system protein H (outH) (Pectobacterium carotovorum subsp. carotovorum (Erwinia carotovora subsp. carotovora)).